A 237-amino-acid chain; its full sequence is Photosystem I-associated linker protein CpcL (237 aa).

In terms of domain architecture, PBS-linker spans 11-191; that stretch reads TTQNQRVQSF…DYRDRAGIVR (181 aa). The helical transmembrane segment at 208–228 threads the bilayer; that stretch reads GVAILGVLLAISAGMTFLFVL.

Belongs to the phycobilisome linker protein family. In terms of assembly, part of a specialized phycobilisome (PBS), a structure that is usually composed of two distinct substructures: a core complex and a number of rods radiating from the core. This protein is part of a core-less PBS rod (called CpcL-PBS). In vegetative cells associated substoichiometrically with photosystem I and phycobiliproteins phycocyanin as well as phycoerythrocyanin in the thylakoid membrane, not found in conventional, hemidiscoidal phycobilisomes.

It is found in the cellular thylakoid membrane. Functionally, rod linker protein, associated with phycocyanin (PC). Linker polypeptides determine the state of aggregation and the location of the disk-shaped phycobiliprotein units within the phycobilisome (PBS) and modulate their spectroscopic properties in order to mediate a directed and optimal energy transfer. Forms a supercomplex with tetrameric photosystem I (PSI) and PC that allows efficient energy transfer from PC to PSI. This protein seems to be in the middle of the PC hexameric rod and may anchor the PC rods at the periphery of PSI tetramers. May be involved in the cyclic electron transport around PSI that provides ATP needed for N(2) fixation in heterocysts. The protein is Photosystem I-associated linker protein CpcL of Nostoc sp. (strain PCC 7120 / SAG 25.82 / UTEX 2576).